Reading from the N-terminus, the 490-residue chain is MVPVVALVGRPNVGKSTLFNRLTRTRDALVADFPGLTRDRKYGRAEIEGREFICIDTGGIDGTEDGVETRMAEQSLLAIEEADVVLFMVDARAGLMPADEAIAKHLRSREKPTFLVANKTDGLDPDQAVVDFYALGLGEIHPIAASHGRGVLSLLEHVLLPWMDDVAPQEEVDEDAEYWAKLAAEENGEEEPEDDFNPQDLPIKLAIVGRPNVGKSTLTNRILGEDRVVVYDMPGTTRDSIYIPMERDEREYVLIDTAGVRKRGKVTDAVEKFSVIKTLQAIEDANVVMLVIDAREGISDQDLSLLGFILNSGRSLVIVVNKWDGLTQEVKEQVKETLDFRLGFIDFARVHFISALHGSGVGNLFESVREAYDSSTRRVSTAMLTRIMAMAVEDHQPPLVRGRRVKLKYAHAGGYNPPIVVIHGNQVKDLPDSYKRYLMNYFRKSLDVMGTPIRIQFKEGENPYANKRNTLTPTQMRKRKRLIKHIKKSK.

2 consecutive EngA-type G domains span residues 3–166 and 203–376; these read PVVA…MDDV and IKLA…DSST. Residues 9–16, 56–60, 118–121, 209–216, 256–260, and 321–324 each bind GTP; these read GRPNVGKS, DTGGI, NKTD, DTAGV, and NKWD. The KH-like domain maps to 377 to 461; that stretch reads RRVSTAMLTR…PIRIQFKEGE (85 aa).

This sequence belongs to the TRAFAC class TrmE-Era-EngA-EngB-Septin-like GTPase superfamily. EngA (Der) GTPase family. In terms of assembly, associates with the 50S ribosomal subunit.

Its function is as follows. GTPase that plays an essential role in the late steps of ribosome biogenesis. The polypeptide is GTPase Der (Citrobacter koseri (strain ATCC BAA-895 / CDC 4225-83 / SGSC4696)).